The primary structure comprises 131 residues: Small ribosomal subunit protein uS8 (131 aa).

Belongs to the universal ribosomal protein uS8 family. As to quaternary structure, part of the 30S ribosomal subunit. Contacts proteins S5 and S12.

One of the primary rRNA binding proteins, it binds directly to 16S rRNA central domain where it helps coordinate assembly of the platform of the 30S subunit. This chain is Small ribosomal subunit protein uS8, found in Wolinella succinogenes (strain ATCC 29543 / DSM 1740 / CCUG 13145 / JCM 31913 / LMG 7466 / NCTC 11488 / FDC 602W) (Vibrio succinogenes).